A 140-amino-acid chain; its full sequence is Protein ApaG (140 aa).

In terms of domain architecture, ApaG spans 13–137 (EARTRDIVVR…FSLHLPGAAM (125 aa)).

The chain is Protein ApaG from Caulobacter vibrioides (strain ATCC 19089 / CIP 103742 / CB 15) (Caulobacter crescentus).